A 102-amino-acid polypeptide reads, in one-letter code: MTLKEFIDKLLRRQPASAETAKERLQLVLAHDRSDLNPELLEQMRREILEVVARYVEIDLAQGDVSLETEDRVTALVANLPIRRPIAQTAKVEPSEQQPAQA.

This sequence belongs to the MinE family.

Its function is as follows. Prevents the cell division inhibition by proteins MinC and MinD at internal division sites while permitting inhibition at polar sites. This ensures cell division at the proper site by restricting the formation of a division septum at the midpoint of the long axis of the cell. The chain is Cell division topological specificity factor from Synechococcus sp. (strain CC9605).